We begin with the raw amino-acid sequence, 759 residues long: Tripartite motif-containing protein 46 (759 aa).

The segment at 1 to 166 is required for proximal axon localization, axon formation and migration; it reads MAEGEDMQTF…VERYRQSVSV (166 aa). Residues 33-59 form an RING-type 1; degenerate zinc finger; the sequence is CPVCQEMYKQPLVLPCTHNVCQACARE. The disordered stretch occupies residues 67–98; the sequence is IGHGGDPSSEPTSPASTPSTRSPRLSRRTLPK. Positions 73–89 are enriched in low complexity; that stretch reads PSSEPTSPASTPSTRSP. An RING-type 2; degenerate zinc finger spans residues 172–231; sequence CQLCKPPPLEATKGCTECRATFCNECFKLFHPWGTQKAQHEPTLPTLSFRPKGLMCPDHK. A B box-type zinc finger spans residues 222-263; it reads PKGLMCPDHKEEVTHYCKTCQRLVCQLCRVRRTHSGHKITPV. Positions 227, 230, 249, and 255 each coordinate Zn(2+). Residues 322–400 are a coiled coil; the sequence is AVLEEKRASL…RATEALQTFR (79 aa). Ser-330 carries the post-translational modification Phosphoserine. The 58-residue stretch at 370-427 folds into the COS domain; the sequence is LKETDQPCFVQAAKQLHNRIARATEALQTFRPAASSSFRHCQLDVGREMKLLTELSFL. The required for microtubule association, proximal axon localization and axon formation stretch occupies residues 411–429; the sequence is QLDVGREMKLLTELSFLRV. A Fibronectin type-III domain is found at 429–528; the sequence is VPEAPVIDTQ…EDVHLHTPPA (100 aa). Residues 526–747 form the B30.2/SPRY domain; it reads PPAPVLHFFL…LQEPVGTKPE (222 aa). The residue at position 627 (Ser-627) is a Phosphoserine.

Belongs to the TRIM/RBCC family. In terms of assembly, interacts with TUBB3 and TUBA4A. As to expression, expressed in the central nervous system, including pyramidal neurons and interneurons in the cortex and hippocampus and all neuronal cell types in the cerebral and cerebellar cortex, and in the peripheral nervous system, including the dorsal root ganglion neurons.

It is found in the cell projection. The protein localises to the axon. It localises to the cytoplasm. The protein resides in the cytoskeleton. In terms of biological role, microtubule-associated protein that is involved in the formation of parallel microtubule bundles linked by cross-bridges in the proximal axon. Required for the uniform orientation and maintenance of the parallel microtubule fascicles, which are important for efficient cargo delivery and trafficking in axons. Thereby also required for proper axon formation, the establishment of neuronal polarity and proper neuronal migration. The sequence is that of Tripartite motif-containing protein 46 (Trim46) from Mus musculus (Mouse).